A 469-amino-acid polypeptide reads, in one-letter code: Calcium/calmodulin-dependent protein kinase type IV (469 aa).

2 positions are modified to phosphoserine; by autocatalysis: Ser-11 and Ser-12. In terms of domain architecture, Protein kinase spans 42–296; it reads FEVESELGRG…TFQALQHPWV (255 aa). ATP contacts are provided by residues 48–56 and Lys-71; that span reads LGRGATSIV. O-linked (GlcNAc) threonine glycosylation occurs at Thr-53. Residue Ser-54 is glycosylated (O-linked (GlcNAc) serine). Ser-133 carries O-linked (GlcNAc) serine glycosylation. Asp-160 (proton acceptor) is an active-site residue. Residue Ser-185 is glycosylated (O-linked (GlcNAc) serine). At Thr-196 the chain carries Phosphothreonine. Residues 297–336 are autoinhibitory domain; the sequence is TGKAANFVHMDTAQKKLQEFNARRKLKAAVKAVVASSRLG. Positions 302–319 are PP2A-binding; that stretch reads NFVHMDTAQKKLQEFNAR. The tract at residues 318–337 is calmodulin-binding; it reads ARRKLKAAVKAVVASSRLGS. The residue at position 332 (Ser-332) is a Phosphoserine; by autocatalysis. The disordered stretch occupies residues 336–469; that stretch reads GSASSSHTSI…PQQDAIQPEY (134 aa). The residue at position 337 (Ser-337) is a Phosphoserine. O-linked (GlcNAc) serine glycans are attached at residues Ser-340, Ser-341, and Ser-352. The segment covering 360–374 has biased composition (basic and acidic residues); that stretch reads DAKDSTDLLGKKMQE. Residues 375 to 388 show a composition bias toward acidic residues; the sequence is EDQEEDQVEAEASA. Basic and acidic residues predominate over residues 389 to 409; that stretch reads DEMRKLQSEEVEKDAGVKEEE. Residues 417-426 are compositionally biased toward acidic residues; sequence DPEDELETDD. The span at 427–441 shows a compositional bias: basic and acidic residues; sequence PEMKRDSEEKLKSVE. Residues Ser-433 and Ser-439 each carry the phosphoserine modification. The span at 442–453 shows a compositional bias: acidic residues; it reads EEMDPMTEEEAP.

Belongs to the protein kinase superfamily. CAMK Ser/Thr protein kinase family. CaMK subfamily. In terms of assembly, monomer. Interacts with protein phosphatase 2A (PPP2CA/PPP2CB); the interaction is mutually exclusive with binding to Ca(2+)/calmodulin. Post-translationally, phosphorylated by CaMKK1 and CaMKK2 on Thr-196. Dephosphorylated by protein phosphatase 2A. Autophosphorylated on Ser-11 and Ser-12. Glycosylation at Ser-185 modulates the phosphorylation of CaMK4 at Thr-196 and negatively regulates its activity toward CREB1 in basal conditions and during early inomycin stimulation. Expressed in brain and testis.

Its subcellular location is the cytoplasm. The protein resides in the nucleus. The catalysed reaction is L-seryl-[protein] + ATP = O-phospho-L-seryl-[protein] + ADP + H(+). The enzyme catalyses L-threonyl-[protein] + ATP = O-phospho-L-threonyl-[protein] + ADP + H(+). Activated by Ca(2+)/calmodulin. Binding of calmodulin results in conformational change that relieves intrasteric autoinhibition and allows phosphorylation of Thr-196 within the activation loop by CaMKK1 or CaMKK2. Phosphorylation of Thr-196 results in a 10-20-fold increase in total activity to generate Ca(2+)/calmodulin-independent activity. Autophosphorylation of the N-terminus Ser-11 and Ser-12 is required for full activation. Inactivated by protein phosphatase 2A (PPP2CA/PPP2CB) which dephosphorylates Thr-196, thereby terminating autonomous activity and helping to maintain the enzyme in its autoinhibited state. Functionally, calcium/calmodulin-dependent protein kinase that operates in the calcium-triggered CaMKK-CaMK4 signaling cascade and regulates, mainly by phosphorylation, the activity of several transcription activators, such as CREB1, MEF2D, JUN and RORA, which play pivotal roles in immune response, inflammation, and memory consolidation. In the thymus, regulates the CD4(+)/CD8(+) double positive thymocytes selection threshold during T-cell ontogeny. In CD4 memory T-cells, is required to link T-cell antigen receptor (TCR) signaling to the production of IL2, IFNG and IL4 (through the regulation of CREB and MEF2). Regulates the differentiation and survival phases of osteoclasts and dendritic cells (DCs). Mediates DCs survival by linking TLR4 and the regulation of temporal expression of BCL2. Phosphorylates the transcription activator CREB1 on 'Ser-133' in hippocampal neuron nuclei and contribute to memory consolidation and long term potentiation (LTP) in the hippocampus. Can activate the MAP kinases MAPK1/ERK2, MAPK8/JNK1 and MAPK14/p38 and stimulate transcription through the phosphorylation of ELK1 and ATF2. Can also phosphorylate in vitro CREBBP, PRM2, MEF2A and STMN1/OP18. May be involved in spermatogenesis. The protein is Calcium/calmodulin-dependent protein kinase type IV (Camk4) of Mus musculus (Mouse).